A 158-amino-acid polypeptide reads, in one-letter code: Cyclic pyranopterin monophosphate synthase (158 aa).

Substrate-binding positions include 75–77 (LCH) and 113–114 (ME). Residue D128 is part of the active site.

This sequence belongs to the MoaC family. As to quaternary structure, homohexamer; trimer of dimers.

The enzyme catalyses (8S)-3',8-cyclo-7,8-dihydroguanosine 5'-triphosphate = cyclic pyranopterin phosphate + diphosphate. Its pathway is cofactor biosynthesis; molybdopterin biosynthesis. Its function is as follows. Catalyzes the conversion of (8S)-3',8-cyclo-7,8-dihydroguanosine 5'-triphosphate to cyclic pyranopterin monophosphate (cPMP). This is Cyclic pyranopterin monophosphate synthase from Pasteurella multocida (strain Pm70).